A 278-amino-acid polypeptide reads, in one-letter code: E3 ubiquitin-protein ligase MARCHF5 (278 aa).

The segment at leucine 6–valine 75 adopts an RING-CH-type zinc-finger fold. The Zn(2+) site is built by cysteine 14, cysteine 17, cysteine 33, cysteine 35, histidine 43, cysteine 46, cysteine 65, and cysteine 68. The next 4 membrane-spanning stretches (helical) occupy residues phenylalanine 99–valine 119, proline 139–isoleucine 159, isoleucine 209–serine 229, and threonine 238–glutamine 258.

Monomer and homodimer. Interacts with MFN1, MFN2, DNM1L and FIS1. Post-translationally, autoubiquitinated leading to degradation (short half-life).

It is found in the mitochondrion outer membrane. It catalyses the reaction S-ubiquitinyl-[E2 ubiquitin-conjugating enzyme]-L-cysteine + [acceptor protein]-L-lysine = [E2 ubiquitin-conjugating enzyme]-L-cysteine + N(6)-ubiquitinyl-[acceptor protein]-L-lysine.. Its pathway is protein modification; protein ubiquitination. In terms of biological role, mitochondrial E3 ubiquitin-protein ligase that plays a crucial role in the control of mitochondrial morphology by acting as a positive regulator of mitochondrial fission and as an important regulator of immune response. Plays a crucial role in maintaining mitochondrial homeostasis by regulating the dynamics of mitochondria through the ubiquitination of key proteins involved in fission and fusion such as FIS1, DNM1L and MFN1. Acts as a critical determinant of mitotic apoptosis through both MCL1-dependent and -independent pathways. Turns off persistent immune signaling by degrading oligomeric complexes of retinoic acid-inducible gene I/DDX58 and mitochondrial antiviral-signaling protein/MAVS formed upon RNA virus infection. Promotes STING-mediated type-I interferon production via 'Lys-63'-linked ubiquitination of STING1 thereby preserving its activity and preventing the formation of inactive STING1 polymers. Plays also an essential role in the formation of PEX3-containing vesicles in the de novo biogenesis of peroxisomes from mitochondria. Acts as a regulator of NLRP3 inflammasome activation on the mitochondria by mediating the 'Lys-27'-linked polyubiquitination of NLRP3, positively regulating the NLRP3-NEK7 complex formation and NLRP3 oligomerization. In Bos taurus (Bovine), this protein is E3 ubiquitin-protein ligase MARCHF5 (MARCHF5).